An 800-amino-acid polypeptide reads, in one-letter code: Ribosome-releasing factor 2, mitochondrial (800 aa).

The tr-type G domain maps to 21 to 307 (SKVRNIGIIA…AIANYLPSPS (287 aa)). GTP contacts are provided by residues 30 to 37 (AHIDAGKT), 95 to 99 (DTPGH), and 147 to 150 (NKMD).

This sequence belongs to the TRAFAC class translation factor GTPase superfamily. Classic translation factor GTPase family. EF-G/EF-2 subfamily.

It localises to the mitochondrion. Its function is as follows. Mitochondrial GTPase that mediates the disassembly of ribosomes from messenger RNA at the termination of mitochondrial protein biosynthesis. Not involved in the GTP-dependent ribosomal translocation step during translation elongation. This Kluyveromyces lactis (strain ATCC 8585 / CBS 2359 / DSM 70799 / NBRC 1267 / NRRL Y-1140 / WM37) (Yeast) protein is Ribosome-releasing factor 2, mitochondrial.